The sequence spans 169 residues: Heat shock protein beta-7 (169 aa).

Positions 1 to 37 (MSHRTSSAFRAERSFRSSSSSSSSSSSSASRALPAQD) are disordered. Residues 1 to 70 (MSHRTSSAFR…PLAFPARPGG (70 aa)) form a required for localization to SC35 splicing speckles region. The segment covering 16-32 (RSSSSSSSSSSSSASRA) has biased composition (low complexity). Residues 61–169 (PLAFPARPGG…QQTFRTEIKI (109 aa)) enclose the sHSP domain.

It belongs to the small heat shock protein (HSP20) family. In terms of assembly, interacts with C-terminal domain of actin-binding protein 280. In terms of tissue distribution, found in both cardiac and slow skeletal (soleus) muscle.

The protein resides in the cytoplasm. Its subcellular location is the nucleus. It is found in the cajal body. This is Heat shock protein beta-7 (Hspb7) from Mus musculus (Mouse).